A 360-amino-acid chain; its full sequence is Chorismate synthase (360 aa).

2 residues coordinate NADP(+): arginine 48 and arginine 54. FMN is bound by residues 125–127, 246–247, glycine 286, 301–305, and arginine 327; these read RSS, NA, and KPTSS.

It belongs to the chorismate synthase family. In terms of assembly, homotetramer. FMNH2 serves as cofactor.

The catalysed reaction is 5-O-(1-carboxyvinyl)-3-phosphoshikimate = chorismate + phosphate. The protein operates within metabolic intermediate biosynthesis; chorismate biosynthesis; chorismate from D-erythrose 4-phosphate and phosphoenolpyruvate: step 7/7. Its function is as follows. Catalyzes the anti-1,4-elimination of the C-3 phosphate and the C-6 proR hydrogen from 5-enolpyruvylshikimate-3-phosphate (EPSP) to yield chorismate, which is the branch point compound that serves as the starting substrate for the three terminal pathways of aromatic amino acid biosynthesis. This reaction introduces a second double bond into the aromatic ring system. This chain is Chorismate synthase, found in Haemophilus ducreyi (strain 35000HP / ATCC 700724).